We begin with the raw amino-acid sequence, 576 residues long: Gamma-aminobutyric acid receptor subunit beta (576 aa).

Residues 1–29 (MSDSMLYQTLQTCLPKSRLITLWLAFTLA) form the signal peptide. The Extracellular segment spans residues 30–268 (MLIQEPRRHA…IQFVRSMGYY (239 aa)). The N-linked (GlcNAc...) asparagine glycan is linked to N56. A disulfide bridge links C183 with C197. The N-linked (GlcNAc...) asparagine glycan is linked to N251. A run of 3 helical transmembrane segments spans residues 269 to 289 (LIQIYIPSGLIVVISWVSFWL), 298 to 320 (VALGVTTVLTMTTLMSSTNAALP), and 330 to 350 (VYLGTCFVMVFASLLEYATVG). Over 351 to 540 (YMAKRIQMRK…TPSDIDKYSR (190 aa)) the chain is Cytoplasmic. Disordered stretches follow at residues 372-418 (QKKQ…QTVS) and 452-507 (HDPK…GDAE). Over residues 398–412 (HGHGHGHHSHGHPHV) the composition is skewed to basic residues. A compositionally biased stretch (pro residues) spans 475-490 (PVGPHGPGPQGPPGGP). Gly residues predominate over residues 491–501 (PAGGGGGGAPP). Residues 541–561 (IVFPVCFVCFNLMYWIIYLHV) form a helical membrane-spanning segment.

The protein belongs to the ligand-gated ion channel (TC 1.A.9) family. Gamma-aminobutyric acid receptor (TC 1.A.9.5) subfamily. As to quaternary structure, homomultimer.

Its subcellular location is the postsynaptic cell membrane. The protein localises to the cell membrane. Functionally, GABA, an inhibitory neurotransmitter, mediates neuronal inhibition by binding to the GABA receptor and opening an integral chloride channel. In Musca domestica (House fly), this protein is Gamma-aminobutyric acid receptor subunit beta.